A 727-amino-acid polypeptide reads, in one-letter code: Rho-related BTB domain-containing protein 2 (727 aa).

Residues 1-210 are rho-like; the sequence is MDSDMDYERP…DNAIRAALIS (210 aa). GTP contacts are provided by residues 21–28, 84–88, and 140–143; these read GDNAVGKT, DTFGD, and CQLD. BTB domains are found at residues 266 to 442 and 500 to 567; these read ADVI…DENE and SDVT…TSSP. Residues 304–333 are disordered; it reads ELGGPSEPGGTHPEDHQGHSDQHHHHHHHH. Basic and acidic residues predominate over residues 315-324; it reads HPEDHQGHSD. The disordered stretch occupies residues 703–727; it reads FWNSPSSPSSSAASSSSPSSSSAVV. Positions 706 to 727 are enriched in low complexity; the sequence is SPSSPSSSAASSSSPSSSSAVV.

This sequence belongs to the small GTPase superfamily. Rho family. As to quaternary structure, interacts with HSP90AA1 and HSP90AB1. Forms a complex with CUL3 and RBX1. Interacts (via BTB 1 domain) with CUL3. Interacts with MSI2. Post-translationally, autoubiquitinated by RHOBTB2-CUL3-RBX1 ubiquitin ligase complex. In terms of tissue distribution, ubiquitous, with highest levels in neural tissues. Expression is also detected in fetal lung, heart, and brain.

Functionally, regulator of cell proliferation and apoptosis. It likely functions as a substrate-adapter that recruits key substrates, e.g. MSI2, to CUL3-based ubiquitin ligase complexes for degradation. Required for MSI2 ubiquitination and degradation. This Homo sapiens (Human) protein is Rho-related BTB domain-containing protein 2 (RHOBTB2).